A 177-amino-acid polypeptide reads, in one-letter code: MSVLDTIARPYAKAIFELAIENQSIEKWKKTLIFINEIIRSKKIEKFLSGSLSPSYLSSFFIFVAGDHIDKDARNLIKLLAENQRFKIFNNILRQFLKLETSYQGNTIIELISAYSLQEHEIIDIRCILQKIFLSKIKFIYKIDHQILDGIIIKKADTVFDFSVRSYLKQLSDVLNF.

Belongs to the ATPase delta chain family. As to quaternary structure, F-type ATPases have 2 components, F(1) - the catalytic core - and F(0) - the membrane proton channel. F(1) has five subunits: alpha(3), beta(3), gamma(1), delta(1), epsilon(1). F(0) has three main subunits: a(1), b(2) and c(10-14). The alpha and beta chains form an alternating ring which encloses part of the gamma chain. F(1) is attached to F(0) by a central stalk formed by the gamma and epsilon chains, while a peripheral stalk is formed by the delta and b chains.

It localises to the cell membrane. In terms of biological role, f(1)F(0) ATP synthase produces ATP from ADP in the presence of a proton or sodium gradient. F-type ATPases consist of two structural domains, F(1) containing the extramembraneous catalytic core and F(0) containing the membrane proton channel, linked together by a central stalk and a peripheral stalk. During catalysis, ATP synthesis in the catalytic domain of F(1) is coupled via a rotary mechanism of the central stalk subunits to proton translocation. Its function is as follows. This protein is part of the stalk that links CF(0) to CF(1). It either transmits conformational changes from CF(0) to CF(1) or is implicated in proton conduction. This chain is ATP synthase subunit delta, found in Buchnera aphidicola subsp. Schizaphis graminum (strain Sg).